A 248-amino-acid chain; its full sequence is Something about silencing protein 5 (248 aa).

In terms of domain architecture, YEATS spans 1–139 (MDHSIEVTFR…SELSKYFDLP (139 aa)). Serine 144 is subject to Phosphoserine. Residues 223 to 248 (TKQERTNFGSDAIHKDEPVKAHNKLK) are disordered.

As to quaternary structure, component of the SAS complex, at least composed of SAS2, SAS4 and SAS5. These three proteins constitute the core of the complex, and are sufficient to acetylate histones.

It localises to the nucleus. Its function is as follows. Component of the SAS complex, a multiprotein complex that acetylates 'Lys-16' of histone H4 and 'Lys-14' of histone H3. The SAS complex is however unable to acetylate nucleosomal histones. The complex is involved in transcriptional silencing at telomeres and at HML locus. Also involved in rDNA silencing. In the complex, SAS5 is required for maximal histone acetyltransferase (HAT) activity of the complex, suggesting that it may be required to stabilize the complex or help in substrate recognition. The protein is Something about silencing protein 5 (SAS5) of Saccharomyces cerevisiae (strain ATCC 204508 / S288c) (Baker's yeast).